The chain runs to 356 residues: Proline-rich protein 19 (356 aa).

The span at Met-1 to Gln-12 shows a compositional bias: polar residues. 4 disordered regions span residues Met-1–Pro-53, Leu-95–Gly-143, Ile-216–Leu-255, and Pro-312–Ser-331. Residues Arg-19 to Arg-29 show a composition bias toward basic residues.

As to quaternary structure, interacts with CNTD1.

The protein localises to the nucleus. The protein resides in the chromosome. Promotes meiotic crossing over formation through its interaction with CNTD1 by participating in the crossover differentiation step of crossover-specific recombination intermediates. This chain is Proline-rich protein 19, found in Homo sapiens (Human).